Reading from the N-terminus, the 223-residue chain is MGQKVHPHGLRVGIIKEWDAKWYADKKNFADNLVEDNKIRKFVKKKGAIAGISKIQIERAAKRIKLNIFTAKPGMIIGKGGQGIEALKTELKKIVPDKVILINIVEVKVAEADAQLMAENIALQLEKRISFRRAMKQTIQRAMKSGIKGVKTTCSGRLGGAEIARSESYHEGTIPLQTLRADIDYGFAEADTTYGKIGVKVWVYKGEVLPVKKPVENKEEAKA.

The 70-residue stretch at 39 to 108 folds into the KH type-2 domain; sequence IRKFVKKKGA…VILINIVEVK (70 aa).

It belongs to the universal ribosomal protein uS3 family. As to quaternary structure, part of the 30S ribosomal subunit. Forms a tight complex with proteins S10 and S14.

In terms of biological role, binds the lower part of the 30S subunit head. Binds mRNA in the 70S ribosome, positioning it for translation. This is Small ribosomal subunit protein uS3 from Clostridium kluyveri (strain NBRC 12016).